Consider the following 145-residue polypeptide: Large ribosomal subunit protein uL13 (145 aa).

This sequence belongs to the universal ribosomal protein uL13 family. As to quaternary structure, part of the 50S ribosomal subunit.

Functionally, this protein is one of the early assembly proteins of the 50S ribosomal subunit, although it is not seen to bind rRNA by itself. It is important during the early stages of 50S assembly. This is Large ribosomal subunit protein uL13 from Bacillus licheniformis (strain ATCC 14580 / DSM 13 / JCM 2505 / CCUG 7422 / NBRC 12200 / NCIMB 9375 / NCTC 10341 / NRRL NRS-1264 / Gibson 46).